Here is a 693-residue protein sequence, read N- to C-terminus: Elongation factor G (693 aa).

The 275-residue stretch at 8–282 folds into the tr-type G domain; it reads KNTRNIGIMA…AVIDYLPSPL (275 aa). GTP is bound by residues 17–24, 81–85, and 135–138; these read AHIDAGKT, DTPGH, and NKMD.

It belongs to the TRAFAC class translation factor GTPase superfamily. Classic translation factor GTPase family. EF-G/EF-2 subfamily.

It is found in the cytoplasm. Functionally, catalyzes the GTP-dependent ribosomal translocation step during translation elongation. During this step, the ribosome changes from the pre-translocational (PRE) to the post-translocational (POST) state as the newly formed A-site-bound peptidyl-tRNA and P-site-bound deacylated tRNA move to the P and E sites, respectively. Catalyzes the coordinated movement of the two tRNA molecules, the mRNA and conformational changes in the ribosome. This chain is Elongation factor G, found in Staphylococcus intermedius.